Here is a 174-residue protein sequence, read N- to C-terminus: Crossover junction endodeoxyribonuclease RuvC (174 aa).

Catalysis depends on residues aspartate 8, glutamate 67, and aspartate 139. Mg(2+) is bound by residues aspartate 8, glutamate 67, and aspartate 139.

Belongs to the RuvC family. Homodimer which binds Holliday junction (HJ) DNA. The HJ becomes 2-fold symmetrical on binding to RuvC with unstacked arms; it has a different conformation from HJ DNA in complex with RuvA. In the full resolvosome a probable DNA-RuvA(4)-RuvB(12)-RuvC(2) complex forms which resolves the HJ. Mg(2+) serves as cofactor.

The protein localises to the cytoplasm. It catalyses the reaction Endonucleolytic cleavage at a junction such as a reciprocal single-stranded crossover between two homologous DNA duplexes (Holliday junction).. The RuvA-RuvB-RuvC complex processes Holliday junction (HJ) DNA during genetic recombination and DNA repair. Endonuclease that resolves HJ intermediates. Cleaves cruciform DNA by making single-stranded nicks across the HJ at symmetrical positions within the homologous arms, yielding a 5'-phosphate and a 3'-hydroxyl group; requires a central core of homology in the junction. The consensus cleavage sequence is 5'-(A/T)TT(C/G)-3'. Cleavage occurs on the 3'-side of the TT dinucleotide at the point of strand exchange. HJ branch migration catalyzed by RuvA-RuvB allows RuvC to scan DNA until it finds its consensus sequence, where it cleaves and resolves the cruciform DNA. This chain is Crossover junction endodeoxyribonuclease RuvC, found in Stutzerimonas stutzeri (strain A1501) (Pseudomonas stutzeri).